The primary structure comprises 393 residues: Beta-ureidopropionase (393 aa).

The CN hydrolase domain occupies 72–344; that stretch reads VRVGLVQNRI…DGLLVTELNL (273 aa). E119 acts as the Proton acceptor in catalysis. K196 (proton donor) is an active-site residue. C233 acts as the Nucleophile in catalysis. A Phosphoserine modification is found at S378.

This sequence belongs to the carbon-nitrogen hydrolase superfamily. BUP family. As to quaternary structure, homodimer, homotetramer, homooctamer; can also form higher homooligomers. In terms of processing, the N-terminus is blocked. As to expression, detected in liver (at protein level).

It localises to the cytoplasm. The enzyme catalyses 3-(carbamoylamino)propanoate + H2O + 2 H(+) = beta-alanine + NH4(+) + CO2. The catalysed reaction is 3-(carbamoylamino)-2-methylpropanoate + H2O + 2 H(+) = (R)-3-amino-2-methylpropanoate + NH4(+) + CO2. It participates in amino-acid biosynthesis; beta-alanine biosynthesis. With respect to regulation, allosteric enzyme with positive cooperativity toward the substrate N-carbamoyl-beta-alanine at low substrate concentrations (below 12 nM). Displays no cooperativity at substrate levels above 12 nM. Its function is as follows. Catalyzes a late step in pyrimidine degradation. Converts N-carbamoyl-beta-alanine (3-ureidopropanoate) into beta-alanine, ammonia and carbon dioxide. Likewise, converts N-carbamoyl-beta-aminoisobutyrate (3-ureidoisobutyrate) into beta-aminoisobutyrate, ammonia and carbon dioxide. The sequence is that of Beta-ureidopropionase (Upb1) from Rattus norvegicus (Rat).